Reading from the N-terminus, the 297-residue chain is Light-independent protochlorophyllide reductase iron-sulfur ATP-binding protein (297 aa).

ATP is bound by residues 41-46 (GIGKST) and Lys70. Ser45 serves as a coordination point for Mg(2+). [4Fe-4S] cluster-binding residues include Cys126 and Cys160. ATP is bound by residues 211–212 (NR) and 235–237 (PDL).

The protein belongs to the NifH/BchL/ChlL family. As to quaternary structure, homodimer. Protochlorophyllide reductase is composed of three subunits; BchL, BchN and BchB. It depends on [4Fe-4S] cluster as a cofactor.

The enzyme catalyses chlorophyllide a + oxidized 2[4Fe-4S]-[ferredoxin] + 2 ADP + 2 phosphate = protochlorophyllide a + reduced 2[4Fe-4S]-[ferredoxin] + 2 ATP + 2 H2O. It functions in the pathway porphyrin-containing compound metabolism; bacteriochlorophyll biosynthesis (light-independent). Its function is as follows. Component of the dark-operative protochlorophyllide reductase (DPOR) that uses Mg-ATP and reduced ferredoxin to reduce ring D of protochlorophyllide (Pchlide) to form chlorophyllide a (Chlide). This reaction is light-independent. The L component serves as a unique electron donor to the NB-component of the complex, and binds Mg-ATP. This chain is Light-independent protochlorophyllide reductase iron-sulfur ATP-binding protein, found in Methylorubrum populi (strain ATCC BAA-705 / NCIMB 13946 / BJ001) (Methylobacterium populi).